The sequence spans 449 residues: MSHITFDYSKVLEQFAGQHEIDFLQGQVTEADQALRQGTGPGSDFLGWLELPENYDKEEFARILKAAEKIKADSDVLVVIGIGGSYLGAKAAIDFLNSHFANLQTAKERKAPQILYAGNSISSSYLADLVDYVQDKDFSVNVISKSGTTTEPAIAFRVFKELLVKKYGQEEANKRIYATTDKVKGAVKVEADANHWETFVVPDNVGGRFSVLTAVGLLPIAASGADITALMEGANAARKDLSSDKISENIAYQYAVVRNILYRKGYVTEILANYEPSLQYFSEWWKQLAGESEGKDQKGIYPTSANFSTDLHSLGQFIQEGYRNLFETVIRVDKPRQNVIIPEMAEDLDGLGYLQGKDVDFVNKKATDGVLLAHTDGGVPNMFITLPEQDEFTLGYTIYFFELAIALSGYLNGVNPFDQPGVEAYKKNMFALLGKPGFEELGAALNARL.

E291 serves as the catalytic Proton donor. Residues H312 and K426 contribute to the active site.

This sequence belongs to the GPI family.

The protein resides in the cytoplasm. The catalysed reaction is alpha-D-glucose 6-phosphate = beta-D-fructose 6-phosphate. Its pathway is carbohydrate biosynthesis; gluconeogenesis. The protein operates within carbohydrate degradation; glycolysis; D-glyceraldehyde 3-phosphate and glycerone phosphate from D-glucose: step 2/4. In terms of biological role, catalyzes the reversible isomerization of glucose-6-phosphate to fructose-6-phosphate. This Streptococcus equi subsp. zooepidemicus (strain MGCS10565) protein is Glucose-6-phosphate isomerase.